A 1233-amino-acid chain; its full sequence is STE20-like serine/threonine-protein kinase (1233 aa).

Phosphoserine is present on S14. Residues 34–292 enclose the Protein kinase domain; sequence WEIIGELGDG…TSQLLQHPFV (259 aa). ATP is bound by residues 40–48 and K63; that span reads LGDGAFGKV. D155 acts as the Proton acceptor in catalysis. The residue at position 183 (T183) is a Phosphothreonine. S189 bears the Phosphoserine mark. Positions 309 to 351 are disordered; sequence AEVTEEVEDGKEEDEEEEAENALPIPANKRASSDLSIASSEED. Over residues 312-328 the composition is skewed to acidic residues; the sequence is TEEVEDGKEEDEEEEAE. Phosphoserine is present on residues S340, S341, S344, S347, S348, S354, and S372. A compositionally biased stretch (basic and acidic residues) spans 363 to 399; it reads VSERTEQSTSEDKFSNKILNEKPTTDGPEKAVDEHAS. Disordered stretches follow at residues 363–453, 498–650, 663–761, and 772–791; these read VSER…ENNR, VSQE…SIEE, ALGS…SGDL, and AKDS…KTLK. The span at 432–441 shows a compositional bias: polar residues; sequence PDTQDQQTVD. The segment covering 518–529 has biased composition (basic and acidic residues); it reads LTKEETQEKLGK. Residues S543, S561, and S566 each carry the phosphoserine modification. Over residues 598–607 the composition is skewed to basic and acidic residues; that stretch reads GGERVEDKQP. A compositionally biased stretch (polar residues) spans 619 to 630; sequence QLTSTSETTRAT. 3 positions are modified to phosphoserine: S643, S647, and S666. A compositionally biased stretch (low complexity) spans 690–701; that stretch reads AESQAPAASQPS. The segment covering 746–761 has biased composition (polar residues); that stretch reads TDSGTGSTVENSSGDL. S775 and S777 each carry phosphoserine. T812 carries the post-translational modification Phosphothreonine. S816 is modified (phosphoserine). Positions 824–1067 form a coiled coil; sequence LRRQELRELR…LKNRQTQERA (244 aa). The region spanning 873–908 is the UVR domain; that stretch reads DQEIENLEKQQKQTIERLEQEHTNRLRDEAKRIKGE. The tract at residues 944 to 963 is disordered; that stretch reads KRRKEELAQSQHAQEQEFVQ. Positions 954–963 are enriched in low complexity; that stretch reads QHAQEQEFVQ. At T1095 the chain carries Phosphothreonine. A coiled-coil region spans residues 1107–1181; sequence AAQEEKRQKN…ELKEWREKLR (75 aa). Residues 1109-1129 are disordered; it reads QEEKRQKNERMAQHQKHESQM.

It belongs to the protein kinase superfamily. STE Ser/Thr protein kinase family. STE20 subfamily. Proteolytically cleaved by caspase-3. Post-translationally, autophosphorylated. In terms of tissue distribution, ubiquitously expressed.

The protein localises to the cytoplasm. The catalysed reaction is L-seryl-[protein] + ATP = O-phospho-L-seryl-[protein] + ADP + H(+). It carries out the reaction L-threonyl-[protein] + ATP = O-phospho-L-threonyl-[protein] + ADP + H(+). Its function is as follows. Mediates apoptosis and actin stress fiber dissolution. The polypeptide is STE20-like serine/threonine-protein kinase (Slk) (Mus musculus (Mouse)).